Consider the following 112-residue polypeptide: Integration host factor subunit alpha (112 aa).

This sequence belongs to the bacterial histone-like protein family. As to quaternary structure, heterodimer of an alpha and a beta chain.

In terms of biological role, this protein is one of the two subunits of integration host factor, a specific DNA-binding protein that functions in genetic recombination as well as in transcriptional and translational control. The sequence is that of Integration host factor subunit alpha from Agrobacterium fabrum (strain C58 / ATCC 33970) (Agrobacterium tumefaciens (strain C58)).